The chain runs to 110 residues: uncharacterized protein (110 aa).

The protein to M.jannaschii MJ0123 and MJ1213.

This is an uncharacterized protein from Aquifex aeolicus (strain VF5).